A 325-amino-acid polypeptide reads, in one-letter code: 5-dehydro-2-deoxygluconokinase (325 aa).

This sequence belongs to the carbohydrate kinase PfkB family.

It carries out the reaction 5-dehydro-2-deoxy-D-gluconate + ATP = 6-phospho-5-dehydro-2-deoxy-D-gluconate + ADP + H(+). It participates in polyol metabolism; myo-inositol degradation into acetyl-CoA; acetyl-CoA from myo-inositol: step 5/7. Functionally, catalyzes the phosphorylation of 5-dehydro-2-deoxy-D-gluconate (2-deoxy-5-keto-D-gluconate or DKG) to 6-phospho-5-dehydro-2-deoxy-D-gluconate (DKGP). The chain is 5-dehydro-2-deoxygluconokinase (iolC) from Bacillus subtilis (strain 168).